The primary structure comprises 161 residues: Prs ADP-ribosylating toxin (161 aa).

Belongs to the MbcT/ParT/Res family. In terms of assembly, homodimer, forms heterotetrameric ParS(2)-ParT(2) complexes. Post-translationally, consumes NAD(+) and auto-ADP-ribosylates on the tryptic fragment Ala-47-Arg-66 in vitro. Also auto-ADP-ribosylates using NADP(+).

In terms of biological role, toxic component of a type II toxin-antitoxin (TA) system. Expression in E.coli inhibits cell growth; bacteriostasis is neutralized by expression of cognate antitoxin ParS. ADP-ribosylates E.coli ribose-phosphate pyrophosphokinase (RPPK, prs) using NAD(+) in vitro; ADP-ribosylates RPPK on 'Lys-182' and 'Ser-202'. Cannot use NADP(+). Also auto-ADP-ribosylates in vitro; in the presence of RPPK auto-ADP-ribosylation decreases. This chain is Prs ADP-ribosylating toxin, found in Sphingobium sp. (strain YBL2).